A 176-amino-acid polypeptide reads, in one-letter code: Photosystem I assembly protein Ycf4 (176 aa).

Transmembrane regions (helical) follow at residues 22–42 and 57–77; these read FLWA…GTAS and VMTF…SMLF.

This sequence belongs to the Ycf4 family.

It is found in the plastid thylakoid membrane. In terms of biological role, seems to be required for the assembly of the photosystem I complex. The chain is Photosystem I assembly protein Ycf4 from Cuscuta obtusiflora (Peruvian dodder).